The primary structure comprises 143 residues: MFIGEYNHAVDTKGRVSIPAKFREELGEHFILTKGLDNCLFIYSSDEWGILENKLKQLPMTNKDARAFVRFFFSGASECELDSQGRIRIPANLREHALLEKEAIIIGVGTRVEIWSNVEWEKYNSDDNLSYDEIANKMAELGI.

2 SpoVT-AbrB domains span residues 5-47 and 76-119; these read EYNH…SSDE and ASEC…SNVE.

This sequence belongs to the MraZ family. Forms oligomers.

It localises to the cytoplasm. Its subcellular location is the nucleoid. The protein is Transcriptional regulator MraZ of Alkaliphilus oremlandii (strain OhILAs) (Clostridium oremlandii (strain OhILAs)).